Here is a 277-residue protein sequence, read N- to C-terminus: 3-methyl-2-oxobutanoate hydroxymethyltransferase (277 aa).

Mg(2+)-binding residues include D53 and D96. Residues 53 to 54 (DS), D96, and K126 contribute to the 3-methyl-2-oxobutanoate site. Residue E128 coordinates Mg(2+). E195 serves as the catalytic Proton acceptor.

It belongs to the PanB family. Homodecamer; pentamer of dimers. Requires Mg(2+) as cofactor.

The protein resides in the cytoplasm. The enzyme catalyses 3-methyl-2-oxobutanoate + (6R)-5,10-methylene-5,6,7,8-tetrahydrofolate + H2O = 2-dehydropantoate + (6S)-5,6,7,8-tetrahydrofolate. It participates in cofactor biosynthesis; (R)-pantothenate biosynthesis; (R)-pantoate from 3-methyl-2-oxobutanoate: step 1/2. Catalyzes the reversible reaction in which hydroxymethyl group from 5,10-methylenetetrahydrofolate is transferred onto alpha-ketoisovalerate to form ketopantoate. The chain is 3-methyl-2-oxobutanoate hydroxymethyltransferase from Chlorobium phaeobacteroides (strain DSM 266 / SMG 266 / 2430).